A 293-amino-acid polypeptide reads, in one-letter code: MMRIALFLLTNLAVMLVFGLVLSLTGIQSSSVQGLMIMAGLFGFGGAFVSLLMSKWMALRSVGGEVIEQPRNETERWLLDTVRRQSQQAGIAMPQVAIYQAPDINAFATGARRDASLVAVSTGLLQNMSRDEAEAVIAHEISHVANGDMVTMTLIQGIVNTFVIFISRLIAQVAAGFLSGDRDNEGSSSGNPMVYFAVSMVLELVFGILASIITMWFSRHREFHADAGSARLVGREKMIAALQRLKTSYEPQEAGNLMAFCINGKSKSFSELFMSHPPLDKRIEALRSGEYLK.

The next 2 helical transmembrane spans lie at 4-24 (IALF…VLSL) and 34-54 (GLMI…LLMS). His139 lines the Zn(2+) pocket. Residue Glu140 is part of the active site. His143 is a binding site for Zn(2+). The next 2 membrane-spanning stretches (helical) occupy residues 158-178 (IVNT…AGFL) and 193-213 (MVYF…ASII). Position 222 (Glu222) interacts with Zn(2+).

It belongs to the peptidase M48B family. Requires Zn(2+) as cofactor.

The protein resides in the cell inner membrane. This is Protease HtpX from Yersinia enterocolitica serotype O:8 / biotype 1B (strain NCTC 13174 / 8081).